Consider the following 359-residue polypeptide: Nicotinate-nucleotide--dimethylbenzimidazole phosphoribosyltransferase (359 aa).

Residue glutamate 318 is the Proton acceptor of the active site.

Belongs to the CobT family. In terms of assembly, homodimer.

The catalysed reaction is 5,6-dimethylbenzimidazole + nicotinate beta-D-ribonucleotide = alpha-ribazole 5'-phosphate + nicotinate + H(+). Its pathway is nucleoside biosynthesis; alpha-ribazole biosynthesis; alpha-ribazole from 5,6-dimethylbenzimidazole: step 1/2. Its function is as follows. Catalyzes the synthesis of alpha-ribazole-5'-phosphate from nicotinate mononucleotide (NAMN) and 5,6-dimethylbenzimidazole (DMB). This Escherichia coli O81 (strain ED1a) protein is Nicotinate-nucleotide--dimethylbenzimidazole phosphoribosyltransferase.